A 357-amino-acid chain; its full sequence is D(4) dopamine receptor (357 aa).

Residues 1–32 lie on the Extracellular side of the membrane; it reads MGNRSAADADGLLAGRGPGTGGGAGSPGAAAA. Asn-3 carries an N-linked (GlcNAc...) asparagine glycan. A helical membrane pass occupies residues 33-55; it reads LVGGVLLIGAVLAGNALVCVSVA. The Cytoplasmic segment spans residues 56–65; it reads AERALQTPTN. A helical transmembrane segment spans residues 66–88; it reads YFIVSLAAADLLLALLVLPLFVY. Asp-75 serves as a coordination point for Na(+). The Extracellular segment spans residues 89 to 104; it reads SEVQGGVWQFSPGLCD. Cys-103 and Cys-180 are disulfide-bonded. A helical transmembrane segment spans residues 105–126; that stretch reads ALMAMDVMLCTASIFNLCAISA. Ser-117 serves as a coordination point for Na(+). At 127-146 the chain is on the cytoplasmic side; the sequence is DRFVAVAVPLSYNRQSGGGR. A helical membrane pass occupies residues 147–170; sequence QLLLIGATWLLSAAVAAPVLCGLN. Residues 171–186 lie on the Extracellular side of the membrane; sequence DARGRDPAVCRLEDRD. Residues 187-208 form a helical membrane-spanning segment; sequence YVVYSSVCSFFLPCPVMLLLYW. At 209-284 the chain is on the cytoplasmic side; the sequence is ATFRGLRRWE…ITGRERKAMR (76 aa). Positions 225–261 are disordered; the sequence is LHGRRPRRPSGPGPPPPEAVETPEAPEAIPTPDATLA. Positions 233 to 242 are enriched in pro residues; sequence PSGPGPPPPE. The span at 243 to 259 shows a compositional bias: low complexity; the sequence is AVETPEAPEAIPTPDAT. The helical transmembrane segment at 285-307 threads the bilayer; it reads VLPVVVGAFLVCWTPFFVVHITG. At 308–316 the chain is on the extracellular side; sequence ALCPACAVP. A disulfide bridge connects residues Cys-310 and Cys-313. Residues 317-339 traverse the membrane as a helical segment; sequence PRLVSAVTWLGYVNSALNPLIYT. At 340–357 the chain is on the cytoplasmic side; that stretch reads VFNAEFRAVFRKALRLCC. Cys-357 carries the S-palmitoyl cysteine lipid modification.

It belongs to the G-protein coupled receptor 1 family. As to quaternary structure, forms homo- and heterooligomers with DRD2. D4.7 allele exhibits higher affinity for homodimers compared to DRD2 heterodimers, while alleles D42. and 4.4 have similar affinities for both. The interaction with DRD2 may modulate agonist-induced downstream signaling. Interacts with CLIC6. Interacts with GPRASP1. May interact with ADORA2A. Interacts with KLHL12. Polyubiquitinated by the BCR(KLHL12) E3 ubiquitin ligase complex: polyubiquitination does not lead to degradation of DRD4 protein. Post-translationally, palmitoylated. Palmitoylation of the C-terminal Cys is important for normal expression at the cell membrane.

The protein localises to the cell membrane. In terms of biological role, dopamine receptor responsible for neuronal signaling in the mesolimbic system of the brain, an area of the brain that regulates emotion and complex behavior. Activated by dopamine, but also by epinephrine and norepinephrine, and by numerous synthetic agonists and drugs. Agonist binding triggers signaling via G proteins that inhibit adenylyl cyclase. Modulates the circadian rhythm of contrast sensitivity by regulating the rhythmic expression of NPAS2 in the retinal ganglion cells. The protein is D(4) dopamine receptor (DRD4) of Mustela putorius furo (European domestic ferret).